Consider the following 439-residue polypeptide: Serine/threonine-protein kinase 2 (439 aa).

The Protein kinase domain occupies 87–439 (NDDFYHISTG…IFSDWINGGN (353 aa)). ATP is bound by residues 93-101 (ISTGGYGIV) and Lys117. Asp307 functions as the Proton acceptor in the catalytic mechanism.

It belongs to the protein kinase superfamily. Ser/Thr protein kinase family. In terms of processing, phosphorylated in vivo. Autophosphorylated in vitro.

It localises to the host endoplasmic reticulum. Its subcellular location is the host endoplasmic reticulum-Golgi intermediate compartment. It catalyses the reaction L-seryl-[protein] + ATP = O-phospho-L-seryl-[protein] + ADP + H(+). It carries out the reaction L-threonyl-[protein] + ATP = O-phospho-L-threonyl-[protein] + ADP + H(+). In terms of biological role, essential serine-protein kinase involved in the early stage of virion morphogenesis. This chain is Serine/threonine-protein kinase 2 (OPG054), found in Bos taurus (Bovine).